The chain runs to 87 residues: uncharacterized protein (87 aa).

Positions 1-23 (MAVSVLRLTVVLGLLVLFLTCYA) are cleaved as a signal peptide. Residues 24–44 (DDKPDKPDDKPDDSGKDPKPD) form a disordered region.

The protein resides in the secreted. This is an uncharacterized protein from Homo sapiens (Human).